A 141-amino-acid polypeptide reads, in one-letter code: Cystatin-S (141 aa).

Residues 1–27 form the signal peptide; it reads MAYLLHAQLFLLTTFILVLNMRLCPVL. Positions 76–80 match the Secondary area of contact motif; it reads QVVAG. Intrachain disulfides connect C94–C104 and C118–C138.

This sequence belongs to the cystatin family. In terms of tissue distribution, found in saliva, tears, urine and seminal fluid.

The protein localises to the secreted. In terms of biological role, this protein strongly inhibits papain and ficin, partially inhibits stem bromelain and bovine cathepsin C, but does not inhibit porcine cathepsin B or clostripain. Papain is inhibited non-competitively. The protein is Cystatin-S (Cst4) of Rattus norvegicus (Rat).